Consider the following 248-residue polypeptide: 2,3-bisphosphoglycerate-dependent phosphoglycerate mutase (248 aa).

Substrate is bound by residues 8 to 15, 21 to 22, Arg-60, 87 to 90, Lys-98, 114 to 115, and 183 to 184; these read RHGESQWN, TG, ERHY, RR, and GN. The Tele-phosphohistidine intermediate role is filled by His-9. The active-site Proton donor/acceptor is Glu-87.

Belongs to the phosphoglycerate mutase family. BPG-dependent PGAM subfamily. In terms of assembly, homodimer.

It catalyses the reaction (2R)-2-phosphoglycerate = (2R)-3-phosphoglycerate. The protein operates within carbohydrate degradation; glycolysis; pyruvate from D-glyceraldehyde 3-phosphate: step 3/5. Catalyzes the interconversion of 2-phosphoglycerate and 3-phosphoglycerate. In Alteromonas mediterranea (strain DSM 17117 / CIP 110805 / LMG 28347 / Deep ecotype), this protein is 2,3-bisphosphoglycerate-dependent phosphoglycerate mutase.